Reading from the N-terminus, the 226-residue chain is Phosphoribosylformylglycinamidine synthase subunit PurQ (226 aa).

In terms of domain architecture, Glutamine amidotransferase type-1 spans 3–226 (RVAVIRFPGT…FESLVEWCRS (224 aa)). The active-site Nucleophile is the Cys86. Active-site residues include His199 and Glu201.

As to quaternary structure, part of the FGAM synthase complex composed of 1 PurL, 1 PurQ and 2 PurS subunits.

It localises to the cytoplasm. The enzyme catalyses N(2)-formyl-N(1)-(5-phospho-beta-D-ribosyl)glycinamide + L-glutamine + ATP + H2O = 2-formamido-N(1)-(5-O-phospho-beta-D-ribosyl)acetamidine + L-glutamate + ADP + phosphate + H(+). It carries out the reaction L-glutamine + H2O = L-glutamate + NH4(+). The protein operates within purine metabolism; IMP biosynthesis via de novo pathway; 5-amino-1-(5-phospho-D-ribosyl)imidazole from N(2)-formyl-N(1)-(5-phospho-D-ribosyl)glycinamide: step 1/2. Part of the phosphoribosylformylglycinamidine synthase complex involved in the purines biosynthetic pathway. Catalyzes the ATP-dependent conversion of formylglycinamide ribonucleotide (FGAR) and glutamine to yield formylglycinamidine ribonucleotide (FGAM) and glutamate. The FGAM synthase complex is composed of three subunits. PurQ produces an ammonia molecule by converting glutamine to glutamate. PurL transfers the ammonia molecule to FGAR to form FGAM in an ATP-dependent manner. PurS interacts with PurQ and PurL and is thought to assist in the transfer of the ammonia molecule from PurQ to PurL. This Methanopyrus kandleri (strain AV19 / DSM 6324 / JCM 9639 / NBRC 100938) protein is Phosphoribosylformylglycinamidine synthase subunit PurQ.